The chain runs to 225 residues: N-(5'-phosphoribosyl)anthranilate isomerase (225 aa).

It belongs to the TrpF family.

It carries out the reaction N-(5-phospho-beta-D-ribosyl)anthranilate = 1-(2-carboxyphenylamino)-1-deoxy-D-ribulose 5-phosphate. Its pathway is amino-acid biosynthesis; L-tryptophan biosynthesis; L-tryptophan from chorismate: step 3/5. This is N-(5'-phosphoribosyl)anthranilate isomerase from Nitrobacter hamburgensis (strain DSM 10229 / NCIMB 13809 / X14).